We begin with the raw amino-acid sequence, 246 residues long: 1-(5-phosphoribosyl)-5-[(5-phosphoribosylamino)methylideneamino] imidazole-4-carboxamide isomerase (246 aa).

Asp8 functions as the Proton acceptor in the catalytic mechanism. Asp131 (proton donor) is an active-site residue.

This sequence belongs to the HisA/HisF family.

It is found in the cytoplasm. It carries out the reaction 1-(5-phospho-beta-D-ribosyl)-5-[(5-phospho-beta-D-ribosylamino)methylideneamino]imidazole-4-carboxamide = 5-[(5-phospho-1-deoxy-D-ribulos-1-ylimino)methylamino]-1-(5-phospho-beta-D-ribosyl)imidazole-4-carboxamide. It functions in the pathway amino-acid biosynthesis; L-histidine biosynthesis; L-histidine from 5-phospho-alpha-D-ribose 1-diphosphate: step 4/9. In Bordetella avium (strain 197N), this protein is 1-(5-phosphoribosyl)-5-[(5-phosphoribosylamino)methylideneamino] imidazole-4-carboxamide isomerase.